The sequence spans 446 residues: Adenylosuccinate synthetase (446 aa).

GTP contacts are provided by residues 20–26 and 48–50; these read GDEGKGK and GHT. The active-site Proton acceptor is Asp-21. Residues Asp-21 and Gly-48 each contribute to the Mg(2+) site. IMP is bound by residues 21–24, 46–49, Thr-137, Arg-151, Gln-232, Thr-247, and Arg-319; these read DEGK and NAGH. His-49 acts as the Proton donor in catalysis. Position 315–321 (315–321) interacts with substrate; that stretch reads SVTGRPR. GTP is bound by residues Arg-321, 347 to 349, and 429 to 431; these read KLD and STG.

It belongs to the adenylosuccinate synthetase family. As to quaternary structure, homodimer. The cofactor is Mg(2+).

It is found in the cytoplasm. It carries out the reaction IMP + L-aspartate + GTP = N(6)-(1,2-dicarboxyethyl)-AMP + GDP + phosphate + 2 H(+). Its pathway is purine metabolism; AMP biosynthesis via de novo pathway; AMP from IMP: step 1/2. Functionally, plays an important role in the de novo pathway of purine nucleotide biosynthesis. Catalyzes the first committed step in the biosynthesis of AMP from IMP. The polypeptide is Adenylosuccinate synthetase (Polynucleobacter asymbioticus (strain DSM 18221 / CIP 109841 / QLW-P1DMWA-1) (Polynucleobacter necessarius subsp. asymbioticus)).